Here is a 461-residue protein sequence, read N- to C-terminus: Phosphoglycerate kinase, chloroplastic (461 aa).

The N-terminal 60 residues, methionine 1 to alanine 60, are a transit peptide targeting the chloroplast. Residues alanine 82, aspartate 83, asparagine 85, arginine 100, serine 122, histidine 123, glycine 125, arginine 126, arginine 182, histidine 214, and arginine 215 each contribute to the (2R)-3-phosphoglycerate site. Residue glycine 260 participates in ADP binding. Glycine 260 contributes to the CDP binding site. 2 residues coordinate AMP: lysine 262 and lysine 266. Lysine 266 contributes to the ATP binding site. Position 284 (glycine 284) interacts with ADP. Glycine 284 serves as a coordination point for CDP. Residues glycine 285 and glycine 357 each contribute to the AMP site. ATP-binding residues include glycine 285 and glycine 357. CDP is bound by residues glycine 382 and phenylalanine 387. Phenylalanine 387 serves as a coordination point for ADP. Glutamate 388 lines the AMP pocket. Residues glutamate 388, aspartate 419, and serine 420 each contribute to the ATP site. Residue aspartate 419 participates in Mg(2+) binding.

This sequence belongs to the phosphoglycerate kinase family. Monomer. It depends on Mg(2+) as a cofactor.

The protein resides in the plastid. Its subcellular location is the chloroplast. The enzyme catalyses (2R)-3-phosphoglycerate + ATP = (2R)-3-phospho-glyceroyl phosphate + ADP. Its pathway is carbohydrate biosynthesis; Calvin cycle. In Chlamydomonas reinhardtii (Chlamydomonas smithii), this protein is Phosphoglycerate kinase, chloroplastic.